Consider the following 138-residue polypeptide: Brain natriuretic peptide (138 aa).

Positions 1 to 22 are cleaved as a signal peptide; sequence MRLSSMWLCSLLLILKLQLSST. Disordered regions lie at residues 50-84 and 99-138; these read EQMA…AGLD and SVRN…PKQR. The cysteines at positions 111 and 127 are disulfide-linked.

This sequence belongs to the natriuretic peptide family.

Its subcellular location is the secreted. Its function is as follows. Cardiac hormone which may function as a paracrine antifibrotic factor in the heart. Also plays a key role in cardiovascular homeostasis through natriuresis, diuresis, vasorelaxation, and inhibition of renin and aldosterone secretion. The sequence is that of Brain natriuretic peptide (nppb) from Oreochromis mossambicus (Mozambique tilapia).